A 346-amino-acid chain; its full sequence is Annexin A1 (346 aa).

S5 is modified (phosphoserine; by TRPM7). Q19 participates in a covalent cross-link: Isoglutamyl lysine isopeptide (Gln-Lys) (interchain with K-?). Y21 is subject to Phosphotyrosine; by EGFR. Phosphoserine; by PKC is present on S27. Residues S34 and S37 each carry the phosphoserine modification. Annexin repeat units follow at residues F42–K113, T114–K185, D197–K269, and S273–G344. Position 58 is an N6-acetyllysine (K58). 11 residues coordinate Ca(2+): G59, V60, E62, K97, L100, E105, M127, G129, G131, T132, and E134. T136 carries the post-translational modification Phosphothreonine. 3 residues coordinate Ca(2+): D171, G210, and R213. Residue K214 forms a Glycyl lysine isopeptide (Lys-Gly) (interchain with G-Cter in SUMO1); alternate linkage. Residue K214 forms a Glycyl lysine isopeptide (Lys-Gly) (interchain with G-Cter in SUMO2); alternate linkage. G215 is a Ca(2+) binding site. At K239 the chain carries N6-acetyllysine. Ca(2+) is bound by residues D253, E255, and L256. Residue K257 forms a Glycyl lysine isopeptide (Lys-Gly) (interchain with G-Cter in SUMO1) linkage. Residues E261, M286, G288, and G290 each coordinate Ca(2+). Residue K312 is modified to N6-acetyllysine. An intrachain disulfide couples C324 to C343. Positions 328, 330, and 331 each coordinate Ca(2+). K332 is covalently cross-linked (Glycyl lysine isopeptide (Lys-Gly) (interchain with G-Cter in SUMO1)). E336 serves as a coordination point for Ca(2+).

It belongs to the annexin family. Homodimer; non-covalently linked. Homodimer; linked by transglutamylation. Homodimers linked by transglutamylation are observed in placenta, but not in other tissues. Interacts with S100A11. Heterotetramer, formed by two molecules each of S100A11 and ANXA1. Interacts with DYSF. Interacts with EGFR. Post-translationally, phosphorylated by protein kinase C, EGFR and TRPM7. Phosphorylated in response to EGF treatment. Sumoylated. In terms of processing, proteolytically cleaved by cathepsin CTSG to release the active N-terminal peptide Ac2-26.

It localises to the nucleus. It is found in the cytoplasm. Its subcellular location is the cell projection. The protein localises to the cilium. The protein resides in the basolateral cell membrane. It localises to the lateral cell membrane. It is found in the cell membrane. Its subcellular location is the apical cell membrane. The protein localises to the membrane. The protein resides in the endosome membrane. It localises to the secreted. It is found in the extracellular space. Its subcellular location is the early endosome. The protein localises to the cytoplasmic vesicle membrane. The protein resides in the extracellular exosome. It localises to the cytoplasmic vesicle. It is found in the secretory vesicle lumen. Its subcellular location is the phagocytic cup. In terms of biological role, plays important roles in the innate immune response as effector of glucocorticoid-mediated responses and regulator of the inflammatory process. Has anti-inflammatory activity. Plays a role in glucocorticoid-mediated down-regulation of the early phase of the inflammatory response. Contributes to the adaptive immune response by enhancing signaling cascades that are triggered by T-cell activation, regulates differentiation and proliferation of activated T-cells. Promotes the differentiation of T-cells into Th1 cells and negatively regulates differentiation into Th2 cells. Has no effect on unstimulated T-cells. Negatively regulates hormone exocytosis via activation of the formyl peptide receptors and reorganization of the actin cytoskeleton. Has high affinity for Ca(2+) and can bind up to eight Ca(2+) ions. Displays Ca(2+)-dependent binding to phospholipid membranes. Plays a role in the formation of phagocytic cups and phagosomes. Plays a role in phagocytosis by mediating the Ca(2+)-dependent interaction between phagosomes and the actin cytoskeleton. Functions at least in part by activating the formyl peptide receptors and downstream signaling cascades. Promotes chemotaxis of granulocytes and monocytes via activation of the formyl peptide receptors. Promotes rearrangement of the actin cytoskeleton, cell polarization and cell migration. Promotes resolution of inflammation and wound healing. Acts via neutrophil N-formyl peptide receptors to enhance the release of CXCL2. The chain is Annexin A1 (ANXA1) from Cavia cutleri (Guinea pig).